We begin with the raw amino-acid sequence, 663 residues long: UvrABC system protein B (663 aa).

Over residues 1–10 (MIDKRDDKPF) the composition is skewed to basic and acidic residues. Residues 1 to 23 (MIDKRDDKPFKLKSKYKPSGDQP) are disordered. In terms of domain architecture, Helicase ATP-binding spans 31-271 (DNIEGGEKAQ…EQSIAKIQAE (241 aa)). Residue 44 to 51 (GATGTGKT) coordinates ATP. The Beta-hairpin signature appears at 97–120 (YYDYYQPEAYVPSSDTYIEKDSSV). The region spanning 435-601 (QMDDLLGEIN…TIKKDIRGLI (167 aa)) is the Helicase C-terminal domain. Positions 627–662 (KEAINALQKQMQEAAELLDFELAAQMRDLILELKLM) constitute a UVR domain.

It belongs to the UvrB family. Forms a heterotetramer with UvrA during the search for lesions. Interacts with UvrC in an incision complex.

It is found in the cytoplasm. Functionally, the UvrABC repair system catalyzes the recognition and processing of DNA lesions. A damage recognition complex composed of 2 UvrA and 2 UvrB subunits scans DNA for abnormalities. Upon binding of the UvrA(2)B(2) complex to a putative damaged site, the DNA wraps around one UvrB monomer. DNA wrap is dependent on ATP binding by UvrB and probably causes local melting of the DNA helix, facilitating insertion of UvrB beta-hairpin between the DNA strands. Then UvrB probes one DNA strand for the presence of a lesion. If a lesion is found the UvrA subunits dissociate and the UvrB-DNA preincision complex is formed. This complex is subsequently bound by UvrC and the second UvrB is released. If no lesion is found, the DNA wraps around the other UvrB subunit that will check the other stand for damage. The sequence is that of UvrABC system protein B from Streptococcus pyogenes serotype M2 (strain MGAS10270).